The sequence spans 147 residues: Ribosomal RNA large subunit methyltransferase H (147 aa).

S-adenosyl-L-methionine contacts are provided by residues leucine 64, glycine 95, and 114-119 (LSSLTL).

It belongs to the RNA methyltransferase RlmH family. In terms of assembly, homodimer.

It localises to the cytoplasm. The enzyme catalyses pseudouridine(1915) in 23S rRNA + S-adenosyl-L-methionine = N(3)-methylpseudouridine(1915) in 23S rRNA + S-adenosyl-L-homocysteine + H(+). Specifically methylates the pseudouridine at position 1915 (m3Psi1915) in 23S rRNA. The sequence is that of Ribosomal RNA large subunit methyltransferase H from Polynucleobacter asymbioticus (strain DSM 18221 / CIP 109841 / QLW-P1DMWA-1) (Polynucleobacter necessarius subsp. asymbioticus).